The primary structure comprises 539 residues: Protein TIC 55, chloroplastic (539 aa).

The transit peptide at 1-50 (MAVPFLSSSLQLTPTSPILFTKVTPTPIIHNHRSTCTIPTKPRLRLLRRS) directs the protein to the chloroplast. A51 is modified (N-acetylalanine). Over 51-482 (AVAGTAVSDQ…VIKSFELWKN (432 aa)) the chain is Stromal. A Rieske domain is found at 88–193 (WYPLYLTKNV…VKDSQGVVWV (106 aa)). Positions 129, 131, 148, and 151 each coordinate [2Fe-2S] cluster. Fe cation contacts are provided by H242 and H247. Residues 467-470 (CRSC) carry the Redox-active motif motif. A helical membrane pass occupies residues 483 to 500 (ILSATAVALTALAILVVS). Topologically, residues 501-504 (RQWK) are chloroplast intermembrane. The helical transmembrane segment at 505–527 (AVLLGSAALCSAAAYTCLRAINL) threads the bilayer. Topologically, residues 528-539 (NTNNFIRTHRRL) are stromal.

In terms of assembly, part of the Tic complex. Interacts with TIC62 and TIC110. It depends on [2Fe-2S] cluster as a cofactor. As to expression, highly expressed in green tissues and very low levels in non-photosynthetic tissues such as roots and etiolated seedlings.

The protein localises to the plastid. It localises to the chloroplast inner membrane. Involved in protein precursor import into chloroplasts. Part of the redox regulon consisting of TIC32, TIC 55 and TIC62. This is Protein TIC 55, chloroplastic (TIC55) from Arabidopsis thaliana (Mouse-ear cress).